The following is a 333-amino-acid chain: Ornithine carbamoyltransferase (333 aa).

Carbamoyl phosphate is bound by residues 56–59, Gln-83, Arg-107, and 134–137; these read STRT and HPTQ. L-ornithine contacts are provided by residues Asn-167, Asp-231, and 235–236; that span reads SM. Carbamoyl phosphate is bound by residues 273–274 and Arg-318; that span reads CL.

It belongs to the aspartate/ornithine carbamoyltransferase superfamily. OTCase family.

The protein resides in the cytoplasm. The enzyme catalyses carbamoyl phosphate + L-ornithine = L-citrulline + phosphate + H(+). Its pathway is amino-acid biosynthesis; L-arginine biosynthesis; L-arginine from L-ornithine and carbamoyl phosphate: step 1/3. Reversibly catalyzes the transfer of the carbamoyl group from carbamoyl phosphate (CP) to the N(epsilon) atom of ornithine (ORN) to produce L-citrulline. This Staphylococcus aureus (strain Mu50 / ATCC 700699) protein is Ornithine carbamoyltransferase (argF).